We begin with the raw amino-acid sequence, 338 residues long: Aspartate carbamoyltransferase catalytic subunit (338 aa).

Residues arginine 59 and threonine 60 each coordinate carbamoyl phosphate. Residue lysine 87 participates in L-aspartate binding. 3 residues coordinate carbamoyl phosphate: arginine 109, histidine 142, and glutamine 145. Arginine 182 and arginine 253 together coordinate L-aspartate. The carbamoyl phosphate site is built by glycine 294 and proline 295.

It belongs to the aspartate/ornithine carbamoyltransferase superfamily. ATCase family. In terms of assembly, heterododecamer (2C3:3R2) of six catalytic PyrB chains organized as two trimers (C3), and six regulatory PyrI chains organized as three dimers (R2).

It carries out the reaction carbamoyl phosphate + L-aspartate = N-carbamoyl-L-aspartate + phosphate + H(+). The protein operates within pyrimidine metabolism; UMP biosynthesis via de novo pathway; (S)-dihydroorotate from bicarbonate: step 2/3. Catalyzes the condensation of carbamoyl phosphate and aspartate to form carbamoyl aspartate and inorganic phosphate, the committed step in the de novo pyrimidine nucleotide biosynthesis pathway. The protein is Aspartate carbamoyltransferase catalytic subunit of Prochlorococcus marinus subsp. pastoris (strain CCMP1986 / NIES-2087 / MED4).